The chain runs to 433 residues: Minor capsid protein (433 aa).

The region spanning 353-419 is the BIG2 domain; it reads TGVTLSQKTM…ADITATTSNG (67 aa).

This sequence belongs to the T7virus minor capsid protein family. Interacts with the connector protein and the major capsid protein.

The protein localises to the virion. Functionally, assembles with the major capsid protein to form an icosahedral capsid with a T=7 symmetry, about 60 nm in diameter, and consisting of 415 capsid proteins. The major and minor capsid proteins are incorporated into the capsid in about a 90/10 ratio respectively. Once the capsid is formed, encapsidates one single copy of the viral genome. In Escherichia coli (Bacteriophage T3), this protein is Minor capsid protein (10).